A 108-amino-acid polypeptide reads, in one-letter code: Large ribosomal subunit protein eL36x (108 aa).

Disordered stretches follow at residues 13 to 34 (GHVV…KTSK) and 75 to 108 (KLGT…EKKK). The span at 75-84 (KLGTHKRAKR) shows a compositional bias: basic residues.

It belongs to the eukaryotic ribosomal protein eL36 family.

The sequence is that of Large ribosomal subunit protein eL36x (RPL36C) from Arabidopsis thaliana (Mouse-ear cress).